A 640-amino-acid chain; its full sequence is DNA gyrase subunit B (640 aa).

The region spanning 423–537 (AELYIVEGDS…NGNIYIAQPP (115 aa)) is the Toprim domain. Residues Glu-429, Asp-502, and Asp-504 each contribute to the Mg(2+) site.

Belongs to the type II topoisomerase GyrB family. In terms of assembly, heterotetramer, composed of two GyrA and two GyrB chains. In the heterotetramer, GyrA contains the active site tyrosine that forms a transient covalent intermediate with DNA, while GyrB binds cofactors and catalyzes ATP hydrolysis. The cofactor is Mg(2+). Requires Mn(2+) as cofactor. Ca(2+) serves as cofactor.

The protein resides in the cytoplasm. It catalyses the reaction ATP-dependent breakage, passage and rejoining of double-stranded DNA.. In terms of biological role, a type II topoisomerase that negatively supercoils closed circular double-stranded (ds) DNA in an ATP-dependent manner to modulate DNA topology and maintain chromosomes in an underwound state. Negative supercoiling favors strand separation, and DNA replication, transcription, recombination and repair, all of which involve strand separation. Also able to catalyze the interconversion of other topological isomers of dsDNA rings, including catenanes and knotted rings. Type II topoisomerases break and join 2 DNA strands simultaneously in an ATP-dependent manner. The polypeptide is DNA gyrase subunit B (Spiroplasma citri).